Reading from the N-terminus, the 208-residue chain is Cytochrome c oxidase assembly protein CtaG (208 aa).

Residues 1–19 lie on the Cytoplasmic side of the membrane; the sequence is MPDTQPNVSPNPIRRRGLG. A helical; Signal-anchor for type II membrane protein transmembrane segment spans residues 20–42; the sequence is RDATVASICGLVVALMVGASFAA. Residues 43–208 are Periplasmic-facing; that stretch reads VPFYNWFCRT…TAPDKRKGNL (166 aa).

The protein belongs to the COX11/CtaG family.

It localises to the cell inner membrane. Functionally, exerts its effect at some terminal stage of cytochrome c oxidase synthesis, probably by being involved in the insertion of the copper B into subunit I. The sequence is that of Cytochrome c oxidase assembly protein CtaG from Rhodopseudomonas palustris (strain HaA2).